The sequence spans 189 residues: GTP cyclohydrolase 1 (189 aa).

Positions 78, 81, and 150 each coordinate Zn(2+).

This sequence belongs to the GTP cyclohydrolase I family. As to quaternary structure, homomer.

The enzyme catalyses GTP + H2O = 7,8-dihydroneopterin 3'-triphosphate + formate + H(+). It participates in cofactor biosynthesis; 7,8-dihydroneopterin triphosphate biosynthesis; 7,8-dihydroneopterin triphosphate from GTP: step 1/1. The chain is GTP cyclohydrolase 1 from Listeria monocytogenes serotype 4b (strain CLIP80459).